The sequence spans 293 residues: Homoserine kinase (293 aa).

Position 84–94 (proline 84–alanine 94) interacts with ATP.

Belongs to the GHMP kinase family. Homoserine kinase subfamily.

The protein resides in the cytoplasm. It catalyses the reaction L-homoserine + ATP = O-phospho-L-homoserine + ADP + H(+). It participates in amino-acid biosynthesis; L-threonine biosynthesis; L-threonine from L-aspartate: step 4/5. Its function is as follows. Catalyzes the ATP-dependent phosphorylation of L-homoserine to L-homoserine phosphate. This Aliarcobacter butzleri (strain RM4018) (Arcobacter butzleri) protein is Homoserine kinase.